A 521-amino-acid polypeptide reads, in one-letter code: Importin subunit alpha-3 (521 aa).

Alanine 2 carries the post-translational modification N-acetylalanine. Residues 2-58 (ADNEKLDNQRLKNFKNKGRDLETMRRQRNEVVVELRKNKRDEHLLKRRNVPHEDICE) form the IBB domain. Residues 43-52 (EHLLKRRNVP) carry the Nuclear localization signal motif. The residue at position 60 (serine 60) is a Phosphoserine. An ARM 1; truncated repeat occupies 66-106 (YRVQNTSLEAIVQNASSDNQGIQLSAVQAARKLLSSDRNPP). ARM repeat units follow at residues 107–149 (IDDL…TSEQ), 150–194 (TQAV…CRDY), 195–233 (VISL…HKDP), 234–278 (PPPM…EQIQ), 279–318 (MVID…TDEQ), 319–360 (TQVV…NQQQ), 361–400 (VQAV…ISGR), and 401–443 (KDQV…KMAE). An NLS binding site (major) region spans residues 137-229 (WALTNIASGT…VTWVMVNLCR (93 aa)). Residues 306–394 (RAVGNIVTGT…QKEAAWAISN (89 aa)) form an NLS binding site (minor) region. Residues 447 to 485 (ETIGNLIEECGGLEKIEQLQNHENEDIYKLAYEIIDQFF) form an ARM 10; atypical repeat.

Belongs to the importin alpha family. In terms of assembly, forms a complex with importin subunit beta-1 (KPNB1). Interacts with SNAI1. Interacts with TALDO1 isoform 1. Interacts with CYB1. As to quaternary structure, (Microbial infection) Interacts with MERS virus protein OF4b; this interaction prevents the translocation of NF-kappa-B complex to the nucleus. (Microbial infection) Interacts with human adenovirus 5 E1A protein; this interaction allows E1A import into the host nucleus. In terms of assembly, (Microbial infection) Interacts with Chikungunya virus capsid protein; this interaction allows the nuclear import of the viral capsid protein. In terms of tissue distribution, highly expressed in testis, ovary, small intestine, heart, skeletal muscle, lung and pancreas, but barely detectable in kidney, thymus, colon and peripheral blood leukocytes.

Its subcellular location is the cytoplasm. The protein resides in the nucleus. Its function is as follows. Functions in nuclear protein import as an adapter protein for nuclear receptor KPNB1. Binds specifically and directly to substrates containing either a simple or bipartite NLS motif. Docking of the importin/substrate complex to the nuclear pore complex (NPC) is mediated by KPNB1 through binding to nucleoporin FxFG repeats and the complex is subsequently translocated through the pore by an energy requiring, Ran-dependent mechanism. At the nucleoplasmic side of the NPC, Ran binds to importin-beta and the three components separate and importin-alpha and -beta are re-exported from the nucleus to the cytoplasm where GTP hydrolysis releases Ran from importin. The directionality of nuclear import is thought to be conferred by an asymmetric distribution of the GTP- and GDP-bound forms of Ran between the cytoplasm and nucleus. Mediates nuclear import of AARS1, MRTFA and RANBP3. Functionally, (Microbial infection) In vitro, mediates the nuclear import of human cytomegalovirus UL84 by recognizing a non-classical NLS. In vitro, mediates the nuclear import of human cytomegalovirus UL84 by recognizing a non-classical NLS. The protein is Importin subunit alpha-3 of Homo sapiens (Human).